Consider the following 596-residue polypeptide: Choline dehydrogenase, mitochondrial (596 aa).

A mitochondrion-targeting transit peptide spans 1–34 (MWQVLRGWRKGWQSPRGALAWAVQGQPCPPCSRA). An FAD-binding site is contributed by 44–73 (TFVVVGAGSAGCVLASRLTEDPNHRVLLLE). K438 is modified (N6-succinyllysine). N6-acetyllysine; alternate occurs at positions 486 and 498. 2 positions are modified to N6-succinyllysine; alternate: K486 and K498. The active-site Proton acceptor is the H513. Position 582 is an N6-acetyllysine (K582).

Belongs to the GMC oxidoreductase family. FAD serves as cofactor. Post-translationally, acetylation of Lys-498 is observed in liver mitochondria from fasted mice but not from fed mice.

Its subcellular location is the mitochondrion inner membrane. The enzyme catalyses choline + A = betaine aldehyde + AH2. The protein operates within amine and polyamine biosynthesis; betaine biosynthesis via choline pathway; betaine aldehyde from choline (cytochrome c reductase route): step 1/1. In Mus musculus (Mouse), this protein is Choline dehydrogenase, mitochondrial (Chdh).